The sequence spans 93 residues: MARSIKKGPFIDDHLMKKVLKSKETKDNKPIKTWSRRSTIVPDMIGLTLNVHNGRAFVPVYVTENHVGYKLGEFAPTRTFKGHKGSVQKKIGK.

The protein belongs to the universal ribosomal protein uS19 family.

In terms of biological role, protein S19 forms a complex with S13 that binds strongly to the 16S ribosomal RNA. This chain is Small ribosomal subunit protein uS19, found in Wolinella succinogenes (strain ATCC 29543 / DSM 1740 / CCUG 13145 / JCM 31913 / LMG 7466 / NCTC 11488 / FDC 602W) (Vibrio succinogenes).